The sequence spans 451 residues: MRSPAPSLPDIIAALATAPGRGGIGVVRVSGAALAPFARALTGREPKPRHAAFTHFVDAVGKPIDEGILLYFPAPHSFTGEDVIELQGHGGPVVLQLVLARCLELGARLAEPGEFSRRAFLNGKMDLAQAEAVADLIEASTVVAARSAVRSLSGVFSDEMHRLTDALIDLRMLVEATLDFPDEDVEFLENARALERLDAIRVKLERVLERARQGALLRSGMNVVLVGQPNVGKSSLLNCLAGDERAIVTDIAGTTRDAVRETIAIEGIPIHVIDTAGLRETADPVERLGVERTWREIARADVILRIVDARVGPQPGDDAIDAALPEGVERITIFNKIDLCGLEPARLQHDDGVVIQLSAQLALGVDLLRSELLRVAGWHAHGDDVVLARERHLVALRDALTHVVAARSQCGALELFAEELRLAQIRIGEITGEFSSDDLLGVIFSRFCIGK.

Residues arginine 28, glutamate 85, and lysine 124 each contribute to the (6S)-5-formyl-5,6,7,8-tetrahydrofolate site. The TrmE-type G domain maps to 220–377 (GMNVVLVGQP…LRSELLRVAG (158 aa)). Asparagine 230 lines the K(+) pocket. GTP-binding positions include 230 to 235 (NVGKSS), 249 to 255 (TDIAGTT), and 274 to 277 (DTAG). Residue serine 234 participates in Mg(2+) binding. 3 residues coordinate K(+): threonine 249, isoleucine 251, and threonine 254. Threonine 255 serves as a coordination point for Mg(2+). Residue lysine 451 participates in (6S)-5-formyl-5,6,7,8-tetrahydrofolate binding.

The protein belongs to the TRAFAC class TrmE-Era-EngA-EngB-Septin-like GTPase superfamily. TrmE GTPase family. As to quaternary structure, homodimer. Heterotetramer of two MnmE and two MnmG subunits. Requires K(+) as cofactor.

Its subcellular location is the cytoplasm. Exhibits a very high intrinsic GTPase hydrolysis rate. Involved in the addition of a carboxymethylaminomethyl (cmnm) group at the wobble position (U34) of certain tRNAs, forming tRNA-cmnm(5)s(2)U34. This is tRNA modification GTPase MnmE from Aromatoleum aromaticum (strain DSM 19018 / LMG 30748 / EbN1) (Azoarcus sp. (strain EbN1)).